The following is a 251-amino-acid chain: Triosephosphate isomerase (251 aa).

9–11 (NWK) lines the substrate pocket. Catalysis depends on His-95, which acts as the Electrophile. Glu-167 functions as the Proton acceptor in the catalytic mechanism. Substrate contacts are provided by residues Gly-173, Ser-212, and 233–234 (GG).

It belongs to the triosephosphate isomerase family. As to quaternary structure, homodimer.

The protein resides in the cytoplasm. It carries out the reaction D-glyceraldehyde 3-phosphate = dihydroxyacetone phosphate. The protein operates within carbohydrate biosynthesis; gluconeogenesis. Its pathway is carbohydrate degradation; glycolysis; D-glyceraldehyde 3-phosphate from glycerone phosphate: step 1/1. Functionally, involved in the gluconeogenesis. Catalyzes stereospecifically the conversion of dihydroxyacetone phosphate (DHAP) to D-glyceraldehyde-3-phosphate (G3P). In Pseudomonas entomophila (strain L48), this protein is Triosephosphate isomerase.